A 438-amino-acid chain; its full sequence is Transmembrane protein 184C (438 aa).

7 helical membrane passes run 17–37, 48–68, 86–106, 176–196, 212–232, 254–274, and 287–307; these read LAVV…VWEL, AWFI…WVIL, ILWM…YPSI, VLQY…CELL, YLVI…LLFY, VVFV…VGVI, and AVAT…AAIA. The disordered stretch occupies residues 358-438; sequence PRKKFFPEDQ…EEPSEKPVAS (81 aa). Composition is skewed to low complexity over residues 374–390 and 404–413; these read SLLS…ASSV and TVTPQTTPTT. Positions 426-438 are enriched in basic and acidic residues; that stretch reads GVREEPSEKPVAS.

Belongs to the TMEM184 family.

It localises to the membrane. In terms of biological role, possible tumor suppressor which may play a role in cell growth. This is Transmembrane protein 184C (TMEM184C) from Bos taurus (Bovine).